Reading from the N-terminus, the 95-residue chain is Selenoprotein K (95 aa).

A helical membrane pass occupies residues 20–42; it reads LSFLTDMFWGITDFIVMFFQSII. Residues 48–95 form a disordered region; it reads RRGCQNSSSRTRFDDGRGPPGNPRRRMGRIDHNSGPNAPPMSGGGUGR. Position 93 (U93) is a non-standard amino acid, selenocysteine.

The protein belongs to the selenoprotein K family.

Its subcellular location is the endoplasmic reticulum membrane. It localises to the cell membrane. Its function is as follows. Required for Ca(2+) flux in immune cells and plays a role in T-cell proliferation and in T-cell and neutrophil migration. Involved in endoplasmic reticulum-associated degradation (ERAD) of soluble glycosylated proteins. Required for cell surface expression of CD36 and involved in macrophage uptake of low-density lipoprotein and in foam cell formation. Required for palmitoylation. The protein is Selenoprotein K (selenok) of Xenopus tropicalis (Western clawed frog).